A 512-amino-acid polypeptide reads, in one-letter code: FAD-dependent monooxygenase prx3 (512 aa).

A signal peptide spans 1–19; sequence MLSLKAFLALSLSIHLSQG. In terms of domain architecture, FAD-binding PCMH-type spans 63-235; that stretch reads CQTTPTCVFA…TRFDLATFSV (173 aa). H100 is modified (pros-8alpha-FAD histidine). N-linked (GlcNAc...) asparagine glycosylation is found at N197, N281, N307, N329, N361, and N477.

It belongs to the oxygen-dependent FAD-linked oxidoreductase family.

It functions in the pathway sesquiterpene biosynthesis. Functionally, FAD-dependent monooxygenase; part of the gene cluster that mediates the biosynthesis of PR-toxin, a bicyclic sesquiterpene belonging to the eremophilane class and acting as a mycotoxin. The first step of the pathway is catalyzed by the aristolochene synthase which performs the cyclization of trans,trans-farnesyl diphosphate (FPP) to the bicyclic sesquiterpene aristolochene. Following the formation of aristolochene, the non-oxygenated aristolochene is converted to the trioxygenated intermediate eremofortin B, via 7-epi-neopetasone. This conversion appears to involve three enzymes, a hydroxysterol oxidase-like enzyme, the quinone-oxidase prx3 that forms the quinone-type-structure in the bicyclic nucleus of aristolochene with the C8-oxo group and the C-3 hydroxyl group, and the P450 monooxygenase ORF6 that introduces the epoxide at the double bond between carbons 1 and 2. No monoxy or dioxy-intermediates have been reported to be released to the broth, so these three early oxidative reactions may be coupled together. Eremofortin B is further oxidized by another P450 monooxygenase, that introduces a second epoxide between carbons 7 and 11 prior to acetylation to eremofortin A by the acetyltransferase ORF8. The second epoxidation may be performed by a second P450 monooxygenase. After the acetylation step, eremofortin A is converted to eremofortin C and then to PR-toxin. First the conversion of eremofortin A to eremofortin C proceeds by oxidation of the side chain of the molecule at C-12 and is catalyzed by the short-chain oxidoreductase prx1. The cytochrome P450 monooxygenase ORF6 is probably also involved in this step. The primary alcohol formed at C-12 is finally oxidized by the short-chain alcohol dehydrogenase prx4 that forms PR-toxin. The protein is FAD-dependent monooxygenase prx3 of Penicillium roqueforti (strain FM164).